The chain runs to 459 residues: Cobyrinate a,c-diamide synthase (459 aa).

A GATase cobBQ-type domain is found at 252-446 (TLALADDEAF…LHVHFAQRPE (195 aa)). Cys334 serves as the catalytic Nucleophile.

The protein belongs to the CobB/CbiA family. In terms of assembly, monomer. Mg(2+) is required as a cofactor.

The enzyme catalyses cob(II)yrinate + 2 L-glutamine + 2 ATP + 2 H2O = cob(II)yrinate a,c diamide + 2 L-glutamate + 2 ADP + 2 phosphate + 2 H(+). It functions in the pathway cofactor biosynthesis; adenosylcobalamin biosynthesis; cob(II)yrinate a,c-diamide from sirohydrochlorin (anaerobic route): step 10/10. Its function is as follows. Catalyzes the ATP-dependent amidation of the two carboxylate groups at positions a and c of cobyrinate, using either L-glutamine or ammonia as the nitrogen source. Is able to use other nucleotide triphosphates as substrate, such as GTP or UTP, although less efficiently than ATP. The protein is Cobyrinate a,c-diamide synthase of Salmonella typhimurium (strain LT2 / SGSC1412 / ATCC 700720).